Consider the following 880-residue polypeptide: Probable receptor-like protein kinase At5g38990 (880 aa).

A signal peptide spans 1–21; it reads MICHVLVIFTILVSAVVDATA. At 22-440 the chain is on the extracellular side; that stretch reads SYEPTDVFLI…GKGKSSHVLP (419 aa). Asn-46, Asn-136, Asn-158, Asn-210, Asn-256, Asn-263, Asn-297, and Asn-324 each carry an N-linked (GlcNAc...) asparagine glycan. Residues 441–461 form a helical membrane-spanning segment; sequence IIIAVVGSAVALAFFVLVVVL. The Cytoplasmic segment spans residues 462–880; it reads VVMKRKKKSN…FSEINEPKAR (419 aa). The interval 471-505 is disordered; it reads NESSVDTTNKPSTNSSWGPLLHGTGSTNTKSASSL. Polar residues-rich tracts occupy residues 472–487 and 494–505; these read ESSVDTTNKPSTNSSW and TGSTNTKSASSL. The 286-residue stretch at 525-810 folds into the Protein kinase domain; the sequence is FEEKLIIGVG…EFALQLHETA (286 aa). ATP is bound by residues 531 to 539 and Lys-554; that span reads IGVGGFGSV. The active-site Proton acceptor is Asp-653. The disordered stretch occupies residues 820 to 846; the sequence is LDLMPSGEVGTTTDGEDDLFSRTTGHV.

It belongs to the protein kinase superfamily. Ser/Thr protein kinase family.

The protein localises to the membrane. In Arabidopsis thaliana (Mouse-ear cress), this protein is Probable receptor-like protein kinase At5g38990.